Consider the following 110-residue polypeptide: Flagellar hook-basal body complex protein FliE (110 aa).

Belongs to the FliE family.

It localises to the bacterial flagellum basal body. The polypeptide is Flagellar hook-basal body complex protein FliE (Pseudomonas putida (strain W619)).